Consider the following 521-residue polypeptide: GMC-type oxidoreductase acuG (521 aa).

FAD contacts are provided by residues 14 to 15 (TV), 34 to 35 (EA), leucine 82, 90 to 93 (NYGL), alanine 492, and 503 to 504 (YQ).

The protein belongs to the GMC oxidoreductase family. The cofactor is FAD.

Its pathway is secondary metabolite biosynthesis. In terms of biological role, GMC-type oxidoreductase; part of the gene cluster that mediates the biosynthesis of aculins. The pathway begins with the synthesis of 6-methylsalicylic acid by the polyketide synthase (PKS) acuA via condensation of acetate and malonate units. The 6-methylsalicylic acid decarboxylase acuB then catalyzes the decarboxylation of 6-methylsalicylic acid to yield m-cresol (also known as 3-methylphenol). These first reactions occur in the cytosol. The intermediate m-cresol is then transported into the endoplasmic reticulum where the cytochrome P450 monooxygenase acuC converts it to m-hydroxybenzyl alcohol, which is further converted to gentisyl alcohol by the cytochrome P450 monooxygenase acuD. Gentisyl alcohol is further oxidized by the oxidoreductase acuE that probably catalyzes hydroxylation of the aromatic ring. The aromatic system might then be opened by oxidation through a Baeyer-Villiger type of oxidation, which could be catalyzed by acuF, with the carboxylic acid at C-1 subsequently reduced to an aldehyde by acuG. Subsequently, a hemiacetal is formed, before the dehydrogenase acuH would reduce the double bond between C-4 and C-6. Finally, keto-enol tautomerism results in formation of aculinic acid, which exists as two diastereomers (both R/S configurations at C-1) by non-enzymatic hemiacetal formation. The carboxypeptidase acuI could be involved in the linking of aculinic acid to an aculene A moiety produced by the aculene biosynthesis cluster and which leads to the production of aculin A. AcuI may also be involved in the attachment of proline to aculinic acid to form epi-aculins A and B. The sequence is that of GMC-type oxidoreductase acuG from Aspergillus aculeatus (strain ATCC 16872 / CBS 172.66 / WB 5094).